The following is a 375-amino-acid chain: Homoserine O-succinyltransferase (375 aa).

The 311-residue stretch at 48–358 (NAVLVCHALS…PAGHDSFLLD (311 aa)) folds into the AB hydrolase-1 domain. S154 acts as the Nucleophile in catalysis. R224 provides a ligand contact to substrate. Active-site residues include D319 and H352. D353 contacts substrate.

The protein belongs to the AB hydrolase superfamily. MetX family. Homodimer.

Its subcellular location is the cytoplasm. It catalyses the reaction L-homoserine + succinyl-CoA = O-succinyl-L-homoserine + CoA. Its pathway is amino-acid biosynthesis; L-methionine biosynthesis via de novo pathway; O-succinyl-L-homoserine from L-homoserine: step 1/1. In terms of biological role, transfers a succinyl group from succinyl-CoA to L-homoserine, forming succinyl-L-homoserine. The chain is Homoserine O-succinyltransferase from Azoarcus sp. (strain BH72).